The chain runs to 77 residues: Acyl carrier protein (77 aa).

A Carrier domain is found at 2–77; it reads STIEERVKKI…EAIDYVVSHQ (76 aa). Position 37 is an O-(pantetheine 4'-phosphoryl)serine (Ser37).

It belongs to the acyl carrier protein (ACP) family. 4'-phosphopantetheine is transferred from CoA to a specific serine of apo-ACP by AcpS. This modification is essential for activity because fatty acids are bound in thioester linkage to the sulfhydryl of the prosthetic group.

It is found in the cytoplasm. It functions in the pathway lipid metabolism; fatty acid biosynthesis. Its function is as follows. Carrier of the growing fatty acid chain in fatty acid biosynthesis. The sequence is that of Acyl carrier protein from Oceanospirillum linum.